A 500-amino-acid chain; its full sequence is tRNA nucleotidyltransferase cca1 (500 aa).

Residues 122–139 (DYTNSNSSNKLVFGTPLE) are flexible loop. The short motif at 231-241 (ERIGVEVDKML) is the ERhxxExxxhh motif element.

Belongs to the tRNA nucleotidyltransferase/poly(A) polymerase family.

The enzyme catalyses a tRNA precursor + 2 CTP = a tRNA with a 3' CC end + 2 diphosphate. Its function is as follows. tRNA nucleotidyltransferase involved in the synthesis of the tRNA CCA terminus. In contrast to what is usually observed in eukaryotes for which one enzyme synthesizes the whole tRNA CCA terminus, in S.pombe, cca1 specifically adds two cytidine residues to a tRNA substrate lacking this sequence while cca2 specifically adds the terminal adenosine residue thereby completing the CCA sequence. The sequence is that of tRNA nucleotidyltransferase cca1 from Schizosaccharomyces pombe (strain 972 / ATCC 24843) (Fission yeast).